The primary structure comprises 874 residues: MKSNQIRQAFLDYFASKGHQIVSSSSLVPAGDPTLLFTNAGMNQFKDVFLGFDKRPYTRATSSQKCVRAGGKHNDLENVGYTARHHTFFEMLGNFSFGDYFKRDAIHYAWELLTQVFKLPADKLTVTVYAEDDEAYDIWTREIGVPAERVIRIGDNKGARYASDNFWMMGDTGPCGPCTEIFYDHGEHIPGGPPGSPDEDGDRFIEIWNNVFMQFNRDEQGVMHPLPKPSVDTGMGLERIAAVLQGVHSNYEIDLFQNLIKAAARVTNTTDLDSPSLKVLADHIRACSFLIADGVIPGNEGRGYVLRRIIRRAIRHGYKLGARQAFFHLMVSALVNEMGDAYPELKSGEERITSILRQEEDRFFETIEHGMAILEAELEEMAKTGNHVFNGETAFKLHDTFGFPLDLTADVCRERGVSVDSAAFDAAMARQKEQARAAGKFKMAANLEYTGNATTFHGYDTLEAQGKVLALYKDGSAVPALNEGELGVVVLDNTPFYAESGGQVGDQGILKGAEGIFQVEDTQKIQASVFGHHGVLSTGTLRVGDEVSARVDLLSRHRTMRHHSATHLMHKALRAVLGSHVQQKGSLVDPDKTRFDFSHNAPVTADEIRRIEDIVNAEILANTPTLARVMPIDEAQKTGAMMLFGEKYGDEVRVLDIGTSRELCGGTHVSRTGDIGLFKIVSESGVAAGVRRIEAAAGDVALRHIQQQQQLLADAAASFKVPAIELAGKISQTLEQIKALEKELARLKSKLASSQGDELASQAVNIGGIKVLAATLEGADANTLRETMDKLKDKLKTAAIVLASVNGDKVSVAAGVTTDTTARIKAGELVNFVAAQVGGKGGGKPDMAMAGGSDPSQLPRALASVAGWVEERLK.

Zn(2+) is bound by residues histidine 563, histidine 567, cysteine 664, and histidine 668.

It belongs to the class-II aminoacyl-tRNA synthetase family. Zn(2+) is required as a cofactor.

The protein resides in the cytoplasm. It carries out the reaction tRNA(Ala) + L-alanine + ATP = L-alanyl-tRNA(Ala) + AMP + diphosphate. In terms of biological role, catalyzes the attachment of alanine to tRNA(Ala) in a two-step reaction: alanine is first activated by ATP to form Ala-AMP and then transferred to the acceptor end of tRNA(Ala). Also edits incorrectly charged Ser-tRNA(Ala) and Gly-tRNA(Ala) via its editing domain. The sequence is that of Alanine--tRNA ligase from Methylobacillus flagellatus (strain ATCC 51484 / DSM 6875 / VKM B-1610 / KT).